The primary structure comprises 285 residues: Small ribosomal subunit biogenesis GTPase RsgA (285 aa).

A CP-type G domain is found at 56–217 (DNLLIRPIVA…IIDTPGFSSI (162 aa)). Residues 105–108 (NKID) and 159–167 (GPSGVGKSS) contribute to the GTP site. Positions 241, 246, 248, and 254 each coordinate Zn(2+).

The protein belongs to the TRAFAC class YlqF/YawG GTPase family. RsgA subfamily. As to quaternary structure, monomer. Associates with 30S ribosomal subunit, binds 16S rRNA. It depends on Zn(2+) as a cofactor.

It localises to the cytoplasm. Its function is as follows. One of several proteins that assist in the late maturation steps of the functional core of the 30S ribosomal subunit. Helps release RbfA from mature subunits. May play a role in the assembly of ribosomal proteins into the subunit. Circularly permuted GTPase that catalyzes slow GTP hydrolysis, GTPase activity is stimulated by the 30S ribosomal subunit. In Fusobacterium nucleatum subsp. nucleatum (strain ATCC 25586 / DSM 15643 / BCRC 10681 / CIP 101130 / JCM 8532 / KCTC 2640 / LMG 13131 / VPI 4355), this protein is Small ribosomal subunit biogenesis GTPase RsgA.